The following is a 195-amino-acid chain: Obelin (195 aa).

The propeptide occupies 1 to 6 (MASKYA). EF-hand domains are found at residues 17–52 (KWIK…DICK), 53–88 (NLGA…FPEF), 110–145 (LIRE…SGIS), and 146–181 (PSEE…FWYT). The Ca(2+) site is built by Asp30, Asn32, Asn34, Gln36, and Glu41. The Ca(2+) site is built by Asp123, Asp125, Ser127, Thr129, Glu134, Asp159, Asp161, Ser163, Glu165, and Glu170.

This sequence belongs to the aequorin family.

Functionally, ca(2+)-dependent bioluminescence photoprotein. Displays an emission peak at 495 nm (blue light). Trace amounts of calcium ion trigger the intramolecular oxidation of the chromophore, coelenterazine into coelenteramide and CO(2) with the concomitant emission of light. The sequence is that of Obelin from Obelia geniculata (Knotted thread hydroid).